Reading from the N-terminus, the 657-residue chain is MPSSTLLELAPNTHSKCKFETRNRSSSSSSGCSSSSTELYDLAAAHAALISRQQQILNQGIPIIPEHQLAAAAVAHHHHQLHPSVQHQLVAGHHHHHLPQVAHHPAILPRSDVIQQPSHFALHQHLQNLVQQQQQQQALHHHQQLVGDMALVSHTHPAAVGSTTCYEKNPQKQQQVPQIPTQPQVAHVSSNAILAAAQPFYQPPVQDSQPDRPIGYGAFGVVWSVTDPRSGKRVALKKMPNVFQNLASCKRVFREIKMLSSFRHDNVLSLLDILQPANPSFFQEFTSWHLTPSIHHQRLISHIKPICLFFVLPLVSLLCAHMYVCMWWHGTALLEGRKETITYVLTELMQSDLHKIIVSPQTLTIDHVKVFVYQILRGLKYLHTANILHRDIKPGNLLVNSNCILKICDFGLARTWDSRDRLNMTHEVVTQYYRAPELLMGARRYTGAVDIWSVGCIFAELLQRKILFQAAGPIEQLQMIIDLLGTPSQEAMKYACEGAKNHVLRAGPRAPNLQSLYRLSQQTTDDAVDLLVKLLKFNPDERISVEEALSHPYLEEGRLRFHSCMCSCCYTKANVPSRIFSQELDPKHESPFDPKWEKDMSRLSMFELREKMYQFVMDRPALYGVALCINPQSAAYKNFASSSVAQASELPPSPQAW.

The region spanning 208–554 (SQPDRPIGYG…VEEALSHPYL (347 aa)) is the Protein kinase domain. ATP contacts are provided by residues 214–222 (IGYGAFGVV) and lysine 237. The active-site Proton acceptor is the aspartate 391.

It belongs to the protein kinase superfamily. Ser/Thr protein kinase family. As to quaternary structure, component of the beta-catenin-lit-1 complex (also called the lit-1/wrm-1 complex or the wrm-1/lit-1 kinase complex) at least composed of lit-1 and wrm-1. Interacts with wrm-1 (via N-terminus); the interaction is direct and activates lit-1 kinase activity which leads to the phosphorylation of pop-1. This promotes pop-1 interaction with par-5 and translocation of pop-1 from the nucleus to the cytoplasm. Interacts with pop-1 (when phosphorylated on 'Ser-125'); the interaction is dependent on the beta-catenin-lit-1 complex. Mg(2+) is required as a cofactor.

It localises to the cytoplasm. The protein localises to the cell cortex. It is found in the nucleus. It carries out the reaction L-seryl-[protein] + ATP = O-phospho-L-seryl-[protein] + ADP + H(+). The enzyme catalyses L-threonyl-[protein] + ATP = O-phospho-L-threonyl-[protein] + ADP + H(+). In terms of biological role, has a role in the Wnt signaling pathway controlling the asymmetry of cell divisions during embryogenesis. Operates in the AB and EMS cell lineages influencing cell specification. Required for body wall muscle development, endoderm development, pop-1 asymmetry and T-cell division asymmetry. Component of the beta-catenin-lit-1 complex which promotes the phosphorylation, down-regulation and subcellular relocation of pop-1. Regulates plp-1 nuclear localization in embryos. Plays a role in male tail tip morphogenesis. In Caenorhabditis briggsae, this protein is Serine/threonine kinase NLK.